The sequence spans 537 residues: Membrane protein insertase YidC (537 aa).

The next 5 membrane-spanning stretches (helical) occupy residues 6–26 (SLLALALLFISFLVYQQWEID), 341–363 (LVSNWGLAIIGVTLVVKAILYPL), 411–431 (LGGCLPLLIQMPIFIALYWTF), 449–469 (LSAQDPYYILPLLMGGSMFLL), and 490–510 (PVIFTVFFLWFPAGLVLYWLV).

The protein belongs to the OXA1/ALB3/YidC family. Type 1 subfamily. As to quaternary structure, interacts with the Sec translocase complex via SecD. Specifically interacts with transmembrane segments of nascent integral membrane proteins during membrane integration.

Its subcellular location is the cell inner membrane. Functionally, required for the insertion and/or proper folding and/or complex formation of integral membrane proteins into the membrane. Involved in integration of membrane proteins that insert both dependently and independently of the Sec translocase complex, as well as at least some lipoproteins. Aids folding of multispanning membrane proteins. The chain is Membrane protein insertase YidC from Actinobacillus succinogenes (strain ATCC 55618 / DSM 22257 / CCUG 43843 / 130Z).